Consider the following 101-residue polypeptide: MEIKKPALAGTLESSDCIVSVEPSMDNTIEINLTSTVKKQFGNEIIKVAKETLKNLGVNSVVMEINDKGALNCVIEARIEAAVCRASEINEFDWGNYKCQD.

Ser-14 is modified (O-(phosphoribosyl dephospho-coenzyme A)serine).

Belongs to the CitD family. Oligomer with a subunit composition of (alpha,beta,gamma)6.

The protein localises to the cytoplasm. Its function is as follows. Covalent carrier of the coenzyme of citrate lyase. The protein is Citrate lyase acyl carrier protein of Clostridium perfringens (strain 13 / Type A).